Reading from the N-terminus, the 177-residue chain is Translation initiation factor IF-3 (177 aa).

This sequence belongs to the IF-3 family. In terms of assembly, monomer.

It is found in the cytoplasm. Functionally, IF-3 binds to the 30S ribosomal subunit and shifts the equilibrium between 70S ribosomes and their 50S and 30S subunits in favor of the free subunits, thus enhancing the availability of 30S subunits on which protein synthesis initiation begins. This chain is Translation initiation factor IF-3, found in Nostoc punctiforme (strain ATCC 29133 / PCC 73102).